We begin with the raw amino-acid sequence, 128 residues long: RutC family protein BU371 (128 aa).

This sequence belongs to the RutC family.

In Buchnera aphidicola subsp. Acyrthosiphon pisum (strain APS) (Acyrthosiphon pisum symbiotic bacterium), this protein is RutC family protein BU371.